The sequence spans 425 residues: 2,3-diketo-L-gulonate TRAP transporter large permease protein YiaN (425 aa).

11 helical membrane-spanning segments follow: residues 3-23 (VLIF…IAWA), 54-74 (FSLL…AGGL), 93-113 (LGYV…SAVA), 139-159 (LIAS…FIIF), 170-190 (LFMA…LTWW), 209-229 (IWHS…IIGG), 235-255 (FTPT…ATVI), 277-297 (VVMF…IAEL), 314-334 (LLFI…DLTP), 355-375 (IYFG…PPIG), and 399-419 (YVLV…LIIL).

It belongs to the TRAP transporter large permease family. In terms of assembly, the complex comprises the extracytoplasmic solute receptor protein YiaO, and the two transmembrane proteins YiaM and YiaN.

The protein resides in the cell inner membrane. In terms of biological role, part of the tripartite ATP-independent periplasmic (TRAP) transport system YiaMNO involved in the uptake of 2,3-diketo-L-gulonate. The chain is 2,3-diketo-L-gulonate TRAP transporter large permease protein YiaN (yiaN) from Escherichia coli (strain K12).